Here is a 349-residue protein sequence, read N- to C-terminus: MIEFDNLTYLHGKPQGTGLLKANPEDFVVVEDLGFEPDGEGEHILVRILKNGCNTRFVADALAKFLKIHTREVSFAGQKDKHAVTEQWLCARVPGKEMPDLSAFQLEGCQVLQYARHKRKLRLGALKGNAFTLVLREVSNRDDVEQRLIDICVKGVPNYFGAQRFGIGGSNLQGALRWAQTNTPVRDRNKRSFWLSAARSAFFNQIVAERLKKADVNQVVDGDALQLAGRGSWFVATTEELAELQRRVNDKELMITAALPGSGEWGTQREALAFEQAAVAEETELQTLLVREKVEAARRAMLLYPQQLSWNWWDDVTVEIRFWLPAGSFATSVVRELINTTGDYAHIAE.

Position 27 (phenylalanine 27) interacts with substrate. Residue aspartate 80 is the Nucleophile of the active site. Asparagine 129 serves as a coordination point for substrate. The TRUD domain occupies 155–303; that stretch reads GVPNYFGAQR…VEAARRAMLL (149 aa). Phenylalanine 329 contacts substrate.

This sequence belongs to the pseudouridine synthase TruD family.

The catalysed reaction is uridine(13) in tRNA = pseudouridine(13) in tRNA. Its function is as follows. Responsible for synthesis of pseudouridine from uracil-13 in transfer RNAs. The chain is tRNA pseudouridine synthase D from Escherichia coli O127:H6 (strain E2348/69 / EPEC).